Consider the following 327-residue polypeptide: GMP reductase (327 aa).

The active-site Thioimidate intermediate is the Cys-175. 204 to 227 (IIADGGIRTHGDIAKSVRFGASMV) serves as a coordination point for NADP(+).

This sequence belongs to the IMPDH/GMPR family. GuaC type 2 subfamily.

It catalyses the reaction IMP + NH4(+) + NADP(+) = GMP + NADPH + 2 H(+). In terms of biological role, catalyzes the irreversible NADPH-dependent deamination of GMP to IMP. It functions in the conversion of nucleobase, nucleoside and nucleotide derivatives of G to A nucleotides, and in maintaining the intracellular balance of A and G nucleotides. This is GMP reductase from Lysinibacillus sphaericus (strain C3-41).